The sequence spans 393 residues: Acetate kinase (393 aa).

Asparagine 6 contributes to the Mg(2+) binding site. Position 13 (lysine 13) interacts with ATP. Arginine 87 lines the substrate pocket. Aspartate 143 serves as the catalytic Proton donor/acceptor. Residues 203–207 (HLGNG), 278–280 (DMR), and 326–330 (GIGEN) each bind ATP. Glutamate 380 is a Mg(2+) binding site.

Belongs to the acetokinase family. Homodimer. Mg(2+) is required as a cofactor. It depends on Mn(2+) as a cofactor.

It localises to the cytoplasm. It carries out the reaction acetate + ATP = acetyl phosphate + ADP. The protein operates within metabolic intermediate biosynthesis; acetyl-CoA biosynthesis; acetyl-CoA from acetate: step 1/2. Functionally, catalyzes the formation of acetyl phosphate from acetate and ATP. Can also catalyze the reverse reaction. The sequence is that of Acetate kinase from Mycoplasma mycoides subsp. mycoides SC (strain CCUG 32753 / NCTC 10114 / PG1).